Consider the following 347-residue polypeptide: N-acetyl-gamma-glutamyl-phosphate reductase (347 aa).

The active site involves Cys151.

This sequence belongs to the NAGSA dehydrogenase family. Type 1 subfamily.

The protein resides in the cytoplasm. The enzyme catalyses N-acetyl-L-glutamate 5-semialdehyde + phosphate + NADP(+) = N-acetyl-L-glutamyl 5-phosphate + NADPH + H(+). It functions in the pathway amino-acid biosynthesis; L-arginine biosynthesis; N(2)-acetyl-L-ornithine from L-glutamate: step 3/4. Its function is as follows. Catalyzes the NADPH-dependent reduction of N-acetyl-5-glutamyl phosphate to yield N-acetyl-L-glutamate 5-semialdehyde. The protein is N-acetyl-gamma-glutamyl-phosphate reductase of Corynebacterium diphtheriae (strain ATCC 700971 / NCTC 13129 / Biotype gravis).